A 283-amino-acid chain; its full sequence is Bifunctional protein FolD (283 aa).

NADP(+)-binding positions include Gly-165–Ser-167 and Ser-190.

The protein belongs to the tetrahydrofolate dehydrogenase/cyclohydrolase family. Homodimer.

It catalyses the reaction (6R)-5,10-methylene-5,6,7,8-tetrahydrofolate + NADP(+) = (6R)-5,10-methenyltetrahydrofolate + NADPH. It carries out the reaction (6R)-5,10-methenyltetrahydrofolate + H2O = (6R)-10-formyltetrahydrofolate + H(+). The protein operates within one-carbon metabolism; tetrahydrofolate interconversion. In terms of biological role, catalyzes the oxidation of 5,10-methylenetetrahydrofolate to 5,10-methenyltetrahydrofolate and then the hydrolysis of 5,10-methenyltetrahydrofolate to 10-formyltetrahydrofolate. The chain is Bifunctional protein FolD from Cupriavidus pinatubonensis (strain JMP 134 / LMG 1197) (Cupriavidus necator (strain JMP 134)).